Here is a 96-residue protein sequence, read N- to C-terminus: Ribonuclease P protein component 1 (96 aa).

Belongs to the eukaryotic/archaeal RNase P protein component 1 family. As to quaternary structure, consists of a catalytic RNA component and at least 5 protein subunits.

It is found in the cytoplasm. It carries out the reaction Endonucleolytic cleavage of RNA, removing 5'-extranucleotides from tRNA precursor.. Functionally, part of ribonuclease P, a protein complex that generates mature tRNA molecules by cleaving their 5'-ends. This is Ribonuclease P protein component 1 from Methanococcus maripaludis (strain DSM 14266 / JCM 13030 / NBRC 101832 / S2 / LL).